The primary structure comprises 61 residues: Small ribosomal subunit protein uS14 (61 aa).

Zn(2+) is bound by residues Cys-24, Cys-27, Cys-40, and Cys-43.

It belongs to the universal ribosomal protein uS14 family. Zinc-binding uS14 subfamily. As to quaternary structure, part of the 30S ribosomal subunit. Contacts proteins S3 and S10. Zn(2+) serves as cofactor.

Binds 16S rRNA, required for the assembly of 30S particles and may also be responsible for determining the conformation of the 16S rRNA at the A site. The protein is Small ribosomal subunit protein uS14 of Thermus aquaticus.